The primary structure comprises 200 residues: Protein Mbur_1344 (200 aa).

The region spanning 5-192 (SEGEQTVRLA…EVEPRGDIEE (188 aa)) is the AMMECR1 domain.

This is Protein Mbur_1344 from Methanococcoides burtonii (strain DSM 6242 / NBRC 107633 / OCM 468 / ACE-M).